The primary structure comprises 232 residues: DnaJ homolog subfamily B member 8 (232 aa).

The region spanning 3-69 (NYYEVLGVQA…KKRSLYDRAG (67 aa)) is the J domain.

As to quaternary structure, interacts with histone deacetylases HDAC4, HDAC6, and SIRT2, HDAC activity is required for antiaggregation.

Its function is as follows. Efficient suppressor of aggregation and toxicity of disease-associated polyglutamine proteins. This Homo sapiens (Human) protein is DnaJ homolog subfamily B member 8 (DNAJB8).